The chain runs to 1275 residues: Surfactin synthase subunit 3 (1275 aa).

One can recognise a Carrier domain in the interval 968-1043 (GPRNEMEETI…GISAYLKNGG (76 aa)). Serine 1003 is subject to O-(pantetheine 4'-phosphoryl)serine. The tract at residues 1059–1271 (QIIFAFPPVL…ILLEFLNTQT (213 aa)) is thioesterase. Catalysis depends on residues serine 1120, aspartate 1147, and histidine 1247.

This sequence belongs to the ATP-dependent AMP-binding enzyme family. It depends on pantetheine 4'-phosphate as a cofactor.

It participates in antibiotic biosynthesis; surfactin biosynthesis. Its function is as follows. Probably activates a leucine. This is Surfactin synthase subunit 3 (srfAC) from Bacillus subtilis (strain 168).